Consider the following 448-residue polypeptide: tRNA modification GTPase MnmE (448 aa).

(6S)-5-formyl-5,6,7,8-tetrahydrofolate is bound by residues arginine 22, glutamate 83, and arginine 122. Residues 219 to 369 (GVKTVIVGRP…LESEILKTLK (151 aa)) form the TrmE-type G domain. Residue asparagine 229 participates in K(+) binding. Residues 229–234 (NVGKSS), 248–254 (SDIAGTT), and 273–276 (DTAG) contribute to the GTP site. Residue serine 233 participates in Mg(2+) binding. Serine 248, isoleucine 250, and threonine 253 together coordinate K(+). Mg(2+) is bound at residue threonine 254. Lysine 448 contacts (6S)-5-formyl-5,6,7,8-tetrahydrofolate.

It belongs to the TRAFAC class TrmE-Era-EngA-EngB-Septin-like GTPase superfamily. TrmE GTPase family. In terms of assembly, homodimer. Heterotetramer of two MnmE and two MnmG subunits. It depends on K(+) as a cofactor.

It localises to the cytoplasm. Its function is as follows. Exhibits a very high intrinsic GTPase hydrolysis rate. Involved in the addition of a carboxymethylaminomethyl (cmnm) group at the wobble position (U34) of certain tRNAs, forming tRNA-cmnm(5)s(2)U34. This chain is tRNA modification GTPase MnmE, found in Acholeplasma laidlawii (strain PG-8A).